Consider the following 360-residue polypeptide: Probable arginine kinase ZC434.8 (360 aa).

The Phosphagen kinase N-terminal domain maps to 10 to 92; that stretch reads SIEEVYTKLQ…FNPVIEEYHN (83 aa). Residue 65-69 participates in substrate binding; it reads GVGIY. Residues 122-359 form the Phosphagen kinase C-terminal domain; the sequence is FIVSTRIRCG…KKLIELEKAA (238 aa). ATP contacts are provided by residues 125-129 and His-189; that span reads STRIR. Glu-229 is a substrate binding site. Arg-233 contributes to the ATP binding site. Cys-275 contributes to the substrate binding site. Residues 284 to 288, 312 to 317, and Asp-327 each bind ATP; these read RASVH and RGIHGE. Glu-317 serves as a coordination point for substrate.

The protein belongs to the ATP:guanido phosphotransferase family.

It carries out the reaction L-arginine + ATP = N(omega)-phospho-L-arginine + ADP + H(+). In Caenorhabditis elegans, this protein is Probable arginine kinase ZC434.8.